We begin with the raw amino-acid sequence, 312 residues long: Olfactory receptor 51B2 (312 aa).

Topologically, residues 1–23 (MWPNITAAPFLLTGFPGLEAAHH) are extracellular. The N-linked (GlcNAc...) asparagine glycan is linked to N4. Residues 24 to 44 (WISIPFFAVYVCILLGNGMLL) traverse the membrane as a helical segment. The Cytoplasmic portion of the chain corresponds to 45-52 (YLIKHDHS). A helical membrane pass occupies residues 53 to 73 (LHEPMYYFLTMLAGTDLMVTL). The Extracellular portion of the chain corresponds to 74–97 (TTMPTVMGILWVNHREISSVGCFL). A disulfide bond links C95 and C187. The chain crosses the membrane as a helical span at residues 98–118 (QAYFIHSLSVVESGSLLAMAY). Topologically, residues 119 to 137 (DCFIAIRNPLRYASILTNT) are cytoplasmic. A helical transmembrane segment spans residues 138–158 (RVIALGVGVFLRGFVSILPVI). Residues 159 to 194 (LRLFSFSYCKSHVITRAFCLHQEIMRLACADITFNR) are Extracellular-facing. The helical transmembrane segment at 195–215 (LYPVILISLTIFLDCLIILFS) threads the bilayer. Over 216 to 235 (YILILNTVIGIASGEERAKA) the chain is Cytoplasmic. The chain crosses the membrane as a helical span at residues 236 to 256 (LNTCISHISCVLIFYVTVMGL). Topologically, residues 257-271 (TFIYRFGKNVPEVVH) are extracellular. The helical transmembrane segment at 272–292 (IIMSYIYFLFPPLMNPVIYSI) threads the bilayer. Topologically, residues 293–312 (KTKQIQYGIIRLLSKHRFSS) are cytoplasmic.

It belongs to the G-protein coupled receptor 1 family. Post-translationally, ubiquitinated by the CRL2(FEM1A) and CRL2(FEM1C) complexes, which recognize the -Lys-Xaa-Xaa-Arg C-degron at the C-terminus, leading to its degradation.

The protein localises to the cell membrane. Odorant receptor. The chain is Olfactory receptor 51B2 (OR51B2) from Homo sapiens (Human).